Reading from the N-terminus, the 186-residue chain is Dynactin subunit 3 (186 aa).

Alanine 2 bears the N-acetylalanine mark. Residues 46–66 adopt a coiled-coil conformation; it reads NIASKRERVKILYKKIEDLIK.

Belongs to the dynactin subunit 3 family. Subunit of dynactin, a multiprotein complex part of a tripartite complex with dynein and a adapter, such as BICDL1, BICD2 or HOOK3. The dynactin complex is built around ACTR1A/ACTB filament and consists of an actin-related filament composed of a shoulder domain, a pointed end and a barbed end. Its length is defined by its flexible shoulder domain. The soulder is composed of 2 DCTN1 subunits, 4 DCTN2 and 2 DCTN3. The 4 DCNT2 (via N-terminus) bind the ACTR1A filament and act as molecular rulers to determine the length. The pointed end is important for binding dynein-dynactin cargo adapters. Consists of 4 subunits: ACTR10, DCNT4, DCTN5 and DCTN6. The barbed end is composed of a CAPZA1:CAPZB heterodimers, which binds ACTR1A/ACTB filament and dynactin and stabilizes dynactin.

The protein resides in the cytoplasm. It is found in the cytoskeleton. It localises to the microtubule organizing center. Its subcellular location is the centrosome. The protein localises to the chromosome. The protein resides in the centromere. It is found in the kinetochore. It localises to the spindle. Its subcellular location is the cleavage furrow. The protein localises to the midbody. In terms of biological role, part of the dynactin complex that activates the molecular motor dynein for ultra-processive transport along microtubules. Together with dynein may be involved in spindle assembly and cytokinesis. The sequence is that of Dynactin subunit 3 from Mus musculus (Mouse).